Consider the following 61-residue polypeptide: MSKKKSFNREYITSYYYIPFHRLEQGFYTSMEYRKVGVFKQQGKIDGHYVGVMAMEKILAM.

This is an uncharacterized protein from Bacillus subtilis (strain 168).